The sequence spans 686 residues: Protein MxiA (686 aa).

Transmembrane regions (helical) follow at residues 28-52 (LIIP…ILVF), 105-129 (FVIG…FIVI), 197-216 (AIAG…SVGM), 232-256 (ILTI…GFIV), 274-292 (IFGN…LAIG), and 299-315 (FFVF…LFYY).

The protein belongs to the FHIPEP (flagella/HR/invasion proteins export pore) family.

It localises to the cell inner membrane. Functionally, necessary for the secretion of IPA invasins. The protein is Protein MxiA (mxiA) of Shigella flexneri.